A 449-amino-acid polypeptide reads, in one-letter code: MREIVHLQTGQCGNQVGSAFWQTISGEHGLDASGIYTGDSDLQLERMNVYFNEAGGNKYVPRAVLIDLEPGTMDALRSGPNGALYRPDNFIYGQSSAGNNWAKGHYTEGAELVDQVIDVVRREAESCDCLQGFQVTHSLGGGTGSGMGTLLISKIREEFPDRMMATFSVMPSPKVSDTVVEPYNATLSVHQLVEHSDETFCLDNDALYDICIRTLKLSSPSYGDLNHLVSAVMSGITVSLRFPGQLNSDLRKLAVNMVPFPRLHFFMVGFAPLTSRSSSSFRTISVPELTQQMFDSRNMMTAANYQNGRFLTCSTLFRGKVAMKEVEDQMRNMQNKYSSYFVEWIPNNVQTALCSMPPKGLKMAATFVGNSTSVQELFNRVSNQFTAMFRRKAFLHWYTGEGMDEMEFTEAESNMNDLMSEYQQYQEATVSDGEGAYDAEEGEAYEQEE.

Gln-11 and Glu-69 together coordinate GTP. Glu-69 lines the Mg(2+) pocket. His-137 is subject to Methylhistidine. GTP contacts are provided by Ser-138, Gly-142, Thr-143, Gly-144, Asn-204, and Asn-226.

The protein belongs to the tubulin family. As to quaternary structure, dimer of alpha and beta chains. A typical microtubule is a hollow water-filled tube with an outer diameter of 25 nm and an inner diameter of 15 nM. Alpha-beta heterodimers associate head-to-tail to form protofilaments running lengthwise along the microtubule wall with the beta-tubulin subunit facing the microtubule plus end conferring a structural polarity. Microtubules usually have 13 protofilaments but different protofilament numbers can be found in some organisms and specialized cells. Requires Mg(2+) as cofactor.

It localises to the cytoplasm. Its subcellular location is the cytoskeleton. Functionally, tubulin is the major constituent of microtubules, a cylinder consisting of laterally associated linear protofilaments composed of alpha- and beta-tubulin heterodimers. Microtubules grow by the addition of GTP-tubulin dimers to the microtubule end, where a stabilizing cap forms. Below the cap, tubulin dimers are in GDP-bound state, owing to GTPase activity of alpha-tubulin. The protein is Tubulin beta-2 chain (tubC) of Emericella nidulans (strain FGSC A4 / ATCC 38163 / CBS 112.46 / NRRL 194 / M139) (Aspergillus nidulans).